An 82-amino-acid chain; its full sequence is Putative membrane protein insertion efficiency factor (82 aa).

It belongs to the UPF0161 family.

It localises to the cell inner membrane. Its function is as follows. Could be involved in insertion of integral membrane proteins into the membrane. This Rickettsia typhi (strain ATCC VR-144 / Wilmington) protein is Putative membrane protein insertion efficiency factor.